A 314-amino-acid chain; its full sequence is UDP-N-acetylenolpyruvoylglucosamine reductase (314 aa).

The 178-residue stretch at 31-208 (RIGGPADYYA…LSARFRLTPK (178 aa)) folds into the FAD-binding PCMH-type domain. R187 is an active-site residue. S237 (proton donor) is an active-site residue. E307 is a catalytic residue.

Belongs to the MurB family. It depends on FAD as a cofactor.

The protein resides in the cytoplasm. It carries out the reaction UDP-N-acetyl-alpha-D-muramate + NADP(+) = UDP-N-acetyl-3-O-(1-carboxyvinyl)-alpha-D-glucosamine + NADPH + H(+). The protein operates within cell wall biogenesis; peptidoglycan biosynthesis. Its function is as follows. Cell wall formation. The sequence is that of UDP-N-acetylenolpyruvoylglucosamine reductase from Agathobacter rectalis (strain ATCC 33656 / DSM 3377 / JCM 17463 / KCTC 5835 / VPI 0990) (Eubacterium rectale).